Reading from the N-terminus, the 425-residue chain is Histone-binding protein RBBP7 (425 aa).

Ala2 carries the N-acetylalanine modification. A Phosphoserine modification is found at Ser3. Lys4 carries the post-translational modification N6-acetyllysine; alternate. Residue Lys4 forms a Glycyl lysine isopeptide (Lys-Gly) (interchain with G-Cter in SUMO2); alternate linkage. Lys4 is covalently cross-linked (Glycyl lysine isopeptide (Lys-Gly) (interchain with G-Cter in ubiquitin); alternate). Thr10 carries the post-translational modification Phosphothreonine. WD repeat units follow at residues 47–122, 128–173, 181–217, 228–269, 275–312, 318–369, and 376–403; these read QWLP…KINH, RARY…LRLR, GLSWNSNLSGHLLSASDDHTVCLWDINAGPKEGKIVD, VVED…HLVD, VNCLSFNPYSEFILATGSADKTVALWDLRNLKLKLHTF, EIFQ…LFIH, and ISDFSWNPNEPWVICSVSEDNIMQIWQM. Position 95 is a phosphoserine (Ser95). Lys101 is covalently cross-linked (Glycyl lysine isopeptide (Lys-Gly) (interchain with G-Cter in SUMO2)). An N6-acetyllysine modification is found at Lys119. Residue Lys155 forms a Glycyl lysine isopeptide (Lys-Gly) (interchain with G-Cter in SUMO2) linkage. Lys159 is subject to N6-acetyllysine; alternate. Residue Lys159 forms a Glycyl lysine isopeptide (Lys-Gly) (interchain with G-Cter in SUMO2); alternate linkage. At Ser354 the chain carries Phosphoserine.

Belongs to the WD repeat RBAP46/RBAP48/MSI1 family. As to quaternary structure, binds directly to helix 1 of the histone fold of histone H4, a region that is not accessible when H4 is in chromatin. Subunit of the type B histone acetyltransferase (HAT) complex, composed of RBBP7 and HAT1. Subunit of the core histone deacetylase (HDAC) complex, which is composed of HDAC1, HDAC2, RBBP4 and RBBP7. The core HDAC complex associates with SIN3A, ARID4B/SAP180, SAP18, SAP30, SAP130, SUDS3/SAP45 and possibly ARID4A/RBP1 and ING1 to form the SIN3 HDAC complex. Component of the nucleosome remodeling and deacetylase (NuRD) repressor complex, composed of core proteins MTA1, MTA2, MTA3, RBBP4, RBBP7, HDAC1, HDAC2, MBD2, MBD3, and peripherally associated proteins CDK2AP1, CDK2AP2, GATAD2A, GATAD2B, CHD3, CHD4 and CHD5. The exact stoichiometry of the NuRD complex is unknown, and some subunits such as MBD2 and MBD3, GATAD2A and GATAD2B, and CHD3, CHD4 and CHD5 define mutually exclusive NuRD complexes. The NuRD complex may interact with MBD3L1. The NuRD complex may interact with MBD3L2. Subunit of the PRC2/EED-EZH2 complex, which is composed of at least EED, EZH2, RBBP4, RBBP7 and SUZ12. The PRC2/EED-EZH2 complex may also associate with HDAC1. Component of the NURF-1 ISWI chromatin remodeling complex (also called the nucleosome-remodeling factor (NURF) complex) at least composed of SMARCA1, BPTF, RBBP4 and RBBP7. Within the complex interacts with SMARCA1. Component of the BPFT-SMARCA1 complex at least composed of SMARCA1, BPFT, RBBP4 and RBBP7; the complex is catalytically inactive and does not remodel chromatin. Within the complex interacts with SMARCA1. Interacts with BRCA1. Interacts with CDK2AP1. Interacts with CENPA. Interacts with CHD3. Interacts with CHD4. Interacts with CREBBP, and this interaction may be enhanced by the binding of phosphorylated CREB1 to CREBBP. Interacts with HDAC7. Interacts with MTA1. Interacts with PWWP2B. Interacts with RB1 (via viral protein-binding domain). Interacts with SUV39H1. Higher levels in brain, thymus, lung, spleen, kidney, testis, and ovary/uterus; lower levels in heart, liver, and muscle.

It localises to the nucleus. Core histone-binding subunit that may target chromatin remodeling factors, histone acetyltransferases and histone deacetylases to their histone substrates in a manner that is regulated by nucleosomal DNA. Component of several complexes which regulate chromatin metabolism. These include the type B histone acetyltransferase (HAT) complex, which is required for chromatin assembly following DNA replication; the core histone deacetylase (HDAC) complex, which promotes histone deacetylation and consequent transcriptional repression; the nucleosome remodeling and histone deacetylase complex (the NuRD complex), which promotes transcriptional repression by histone deacetylation and nucleosome remodeling; and the PRC2/EED-EZH2 complex, which promotes repression of homeotic genes during development; and the NURF (nucleosome remodeling factor) complex. The polypeptide is Histone-binding protein RBBP7 (Rbbp7) (Mus musculus (Mouse)).